Consider the following 178-residue polypeptide: MILSDRDIRALLAIGDLVVEPLSGDTVRENGLDLRLGRGFCRFKRSDRVLDPRAPGSPGEFYECGEGDEIIVGPGEHMLLHTQEYIRLPGYVAGLVNLRSTWARTGIYIPATVVDAGFEGQLTIEVVGSGFPVKLYPGDRFLHLVLVKLQSPAMNPYRGRYQGQRGVRLPKLFAKNTG.

DCTP-binding positions include 99–104 (RSTWAR) and D115. The active-site Proton donor/acceptor is E125. DCTP is bound by residues Y157 and Q164.

This sequence belongs to the dCTP deaminase family. In terms of assembly, homotrimer.

The enzyme catalyses dCTP + H2O + H(+) = dUTP + NH4(+). It participates in pyrimidine metabolism; dUMP biosynthesis; dUMP from dCTP (dUTP route): step 1/2. Its function is as follows. Catalyzes the deamination of dCTP to dUTP. This Aeropyrum pernix (strain ATCC 700893 / DSM 11879 / JCM 9820 / NBRC 100138 / K1) protein is dCTP deaminase.